Here is a 469-residue protein sequence, read N- to C-terminus: 3-isopropylmalate dehydratase large subunit (469 aa).

The [4Fe-4S] cluster site is built by cysteine 349, cysteine 409, and cysteine 412.

Belongs to the aconitase/IPM isomerase family. LeuC type 1 subfamily. Heterodimer of LeuC and LeuD. [4Fe-4S] cluster is required as a cofactor.

It carries out the reaction (2R,3S)-3-isopropylmalate = (2S)-2-isopropylmalate. It participates in amino-acid biosynthesis; L-leucine biosynthesis; L-leucine from 3-methyl-2-oxobutanoate: step 2/4. Its function is as follows. Catalyzes the isomerization between 2-isopropylmalate and 3-isopropylmalate, via the formation of 2-isopropylmaleate. This is 3-isopropylmalate dehydratase large subunit from Methylorubrum populi (strain ATCC BAA-705 / NCIMB 13946 / BJ001) (Methylobacterium populi).